A 758-amino-acid polypeptide reads, in one-letter code: 3-isopropylmalate dehydratase (758 aa).

Residues Cys359, Cys420, and Cys423 each contribute to the [4Fe-4S] cluster site. Phosphoserine is present on residues Ser486 and Ser488.

It belongs to the aconitase/IPM isomerase family. Requires [4Fe-4S] cluster as cofactor.

The enzyme catalyses (2R,3S)-3-isopropylmalate = (2S)-2-isopropylmalate. Its pathway is amino-acid biosynthesis; L-leucine biosynthesis; L-leucine from 3-methyl-2-oxobutanoate: step 2/4. Catalyzes the isomerization between 2-isopropylmalate and 3-isopropylmalate, via the formation of 2-isopropylmaleate. This is 3-isopropylmalate dehydratase (leu2) from Schizosaccharomyces pombe (strain 972 / ATCC 24843) (Fission yeast).